The chain runs to 142 residues: Negative cofactor 2 complex subunit alpha (142 aa).

Positions 1 to 11 are enriched in polar residues; that stretch reads MADQVPVTTQL. Residues 1–43 are disordered; sequence MADQVPVTTQLPPIKPEHEVPLDAGGSPVGNMGTNSNNNNELG. Serine 27 is modified (phosphoserine). A Histone-fold domain is found at 29–137; sequence VGNMGTNSNN…LCVEEGQTQP (109 aa). A Phosphoserine modification is found at serine 141.

The protein belongs to the NC2 alpha/DRAP1 family. As to quaternary structure, component of the NC2 (negative cofactor 2) complex composed of BUR6 and NCB2. The NC2 complex associates with SPT15/TBP. Interacts with SPT15/TBP.

The protein resides in the nucleus. In terms of biological role, component of the NC2 complex which represses RNA polymerase II transcription through binding to SPT15/TBP and thereby inhibiting the assembly of the preinitiation complex. The NC2 complex may also mediate transcriptional activation from TATA-driven promoters through association with SPT15/TBP. This chain is Negative cofactor 2 complex subunit alpha (BUR6), found in Saccharomyces cerevisiae (strain ATCC 204508 / S288c) (Baker's yeast).